The following is a 216-amino-acid chain: Ribonuclease HII (216 aa).

One can recognise an RNase H type-2 domain in the interval 33 to 216; the sequence is WPVAGADEAG…RMSFRPFRQV (184 aa). 3 residues coordinate a divalent metal cation: D39, E40, and D130.

It belongs to the RNase HII family. Requires Mn(2+) as cofactor. Mg(2+) is required as a cofactor.

It is found in the cytoplasm. It carries out the reaction Endonucleolytic cleavage to 5'-phosphomonoester.. Endonuclease that specifically degrades the RNA of RNA-DNA hybrids. The protein is Ribonuclease HII of Rhizobium meliloti (strain 1021) (Ensifer meliloti).